A 285-amino-acid polypeptide reads, in one-letter code: Xanthoxin dehydrogenase (285 aa).

Ser2 is modified (N-acetylserine).

This sequence belongs to the short-chain dehydrogenases/reductases (SDR) family. Predominantly in roots and stems, and at lower levels in leaves and seeds.

Its subcellular location is the cytoplasm. It carries out the reaction 2-cis,4-trans-xanthoxin + NAD(+) = 2-cis-(+)-abscisic aldehyde + NADH + H(+). The catalysed reaction is 2-trans,4-trans-xanthoxin + NAD(+) = 2-trans-(+)-abscisic aldehyde + NADH + H(+). In terms of biological role, involved in the biosynthesis of abscisic acid. Catalyzes the conversion of xanthoxin to abscisic aldehyde. This Arabidopsis thaliana (Mouse-ear cress) protein is Xanthoxin dehydrogenase.